The primary structure comprises 419 residues: UDP-N-acetylglucosamine 1-carboxyvinyltransferase (419 aa).

A phosphoenolpyruvate-binding site is contributed by lysine 22 to asparagine 23. Residue arginine 93 coordinates UDP-N-acetyl-alpha-D-glucosamine. Catalysis depends on cysteine 117, which acts as the Proton donor. At cysteine 117 the chain carries 2-(S-cysteinyl)pyruvic acid O-phosphothioketal. UDP-N-acetyl-alpha-D-glucosamine contacts are provided by aspartate 307 and isoleucine 329.

The protein belongs to the EPSP synthase family. MurA subfamily.

The protein resides in the cytoplasm. It catalyses the reaction phosphoenolpyruvate + UDP-N-acetyl-alpha-D-glucosamine = UDP-N-acetyl-3-O-(1-carboxyvinyl)-alpha-D-glucosamine + phosphate. The protein operates within cell wall biogenesis; peptidoglycan biosynthesis. Functionally, cell wall formation. Adds enolpyruvyl to UDP-N-acetylglucosamine. This is UDP-N-acetylglucosamine 1-carboxyvinyltransferase from Shewanella putrefaciens (strain CN-32 / ATCC BAA-453).